Here is a 240-residue protein sequence, read N- to C-terminus: Aspartate/glutamate leucyltransferase (240 aa).

Belongs to the R-transferase family. Bpt subfamily.

It is found in the cytoplasm. The enzyme catalyses N-terminal L-glutamyl-[protein] + L-leucyl-tRNA(Leu) = N-terminal L-leucyl-L-glutamyl-[protein] + tRNA(Leu) + H(+). It catalyses the reaction N-terminal L-aspartyl-[protein] + L-leucyl-tRNA(Leu) = N-terminal L-leucyl-L-aspartyl-[protein] + tRNA(Leu) + H(+). In terms of biological role, functions in the N-end rule pathway of protein degradation where it conjugates Leu from its aminoacyl-tRNA to the N-termini of proteins containing an N-terminal aspartate or glutamate. The polypeptide is Aspartate/glutamate leucyltransferase (Thiobacillus denitrificans (strain ATCC 25259 / T1)).